A 346-amino-acid chain; its full sequence is N-acetyl-gamma-glutamyl-phosphate reductase (346 aa).

Cys149 is a catalytic residue.

This sequence belongs to the NAGSA dehydrogenase family. Type 1 subfamily.

It localises to the cytoplasm. The catalysed reaction is N-acetyl-L-glutamate 5-semialdehyde + phosphate + NADP(+) = N-acetyl-L-glutamyl 5-phosphate + NADPH + H(+). It participates in amino-acid biosynthesis; L-arginine biosynthesis; N(2)-acetyl-L-ornithine from L-glutamate: step 3/4. Its function is as follows. Catalyzes the NADPH-dependent reduction of N-acetyl-5-glutamyl phosphate to yield N-acetyl-L-glutamate 5-semialdehyde. In Geobacter sulfurreducens (strain ATCC 51573 / DSM 12127 / PCA), this protein is N-acetyl-gamma-glutamyl-phosphate reductase.